The primary structure comprises 594 residues: Neuronal PAS domain-containing protein 1 (594 aa).

Residues 45–98 form the bHLH domain; it reads QRKEKSRNAARWRRGKENLEFFELAKLLPLPGAISSQLDKASIVRLSVTYLRLR. Residues 135–205 enclose the PAS 1 domain; that stretch reads EQHLGGHILQ…EQLGLRAASI (71 aa). Residues 206–237 are disordered; sequence GPPTPPSVSSSSSSSSSSLVDTPEIEASPTEA. The span at 212–223 shows a compositional bias: low complexity; sequence SVSSSSSSSSSS. A PAS 2 domain is found at 294-360; it reads APLAELPLHG…IRQSHLDLLD (67 aa). A PAC domain is found at 366 to 409; it reads TGYYRWLQRAGGFVWLQSVATVAGNGKSTGEHHVLWVSHVLSNA. The tract at residues 427-498 is disordered; sequence QEEPSRPGPE…DPPAPPRPEF (72 aa). Residues 453 to 480 show a composition bias toward basic and acidic residues; that stretch reads DQDKDKDPQARGKRIKVEASPKEARGSE.

Efficient DNA binding requires dimerization with another bHLH protein. Interacts with ARNT; forms a heterodimer that binds core DNA sequence 5'-[AG]CGTG-3' within the hypoxia response element (HRE) leading to a transcriptional repressor on its target gene TH. In terms of tissue distribution, expressed in brain in inhibitory interneurons. Also found in spinal cord.

The protein localises to the nucleus. May control regulatory pathways relevant to schizophrenia and to psychotic illness. May play a role in late central nervous system development by modulating EPO expression in response to cellular oxygen level. Forms a heterodimer that binds core DNA sequence 5'-TACGTG-3' within the hypoxia response element (HRE) leading to transcriptional repression on its target gene TH. This is Neuronal PAS domain-containing protein 1 (Npas1) from Mus musculus (Mouse).